Consider the following 534-residue polypeptide: Cytochrome P450 monooxygenase btcB (534 aa).

A glycan (N-linked (GlcNAc...) asparagine) is linked at Asn-20. Residues 41–61 (ALAFLCGALLFGFVYSVFYNL) form a helical membrane-spanning segment. Asn-335, Asn-413, and Asn-431 each carry an N-linked (GlcNAc...) asparagine glycan. Position 484 (Cys-484) interacts with heme.

It belongs to the cytochrome P450 family. Heme serves as cofactor.

The protein localises to the membrane. It participates in secondary metabolite biosynthesis; terpenoid biosynthesis. Its function is as follows. Cytochrome P4590 monooxygenase part of the gene cluster that mediates the biosynthesis of betaestacins. The bifunctional terpene synthase btcA converts isopentenyl diphosphate (IPP) and dimethylallyl diphosphate (DMAPP) into the sesterterpene betaestacin I. The C-terminal prenyltransferase (PT) domain of btcA catalyzes formation of GFPP, whereas the N-terminal terpene cyclase (TC) domain catalyzes the cyclization of GFPP into betaestacin I. The cytochrome P450 monooxygenase btcB oxidizes the C25 methyl group of betaestacin I to yield the carboxylic acid betaestacin IV via the alcohol betaestacin III. The cytochrome P450 monooxygenase btcC further catalyzes the multistep oxidation of betaestacin IV to produce several compounds, including betaestacins Va, Vb, Vc and VI. This Colletotrichum orbiculare (strain 104-T / ATCC 96160 / CBS 514.97 / LARS 414 / MAFF 240422) (Cucumber anthracnose fungus) protein is Cytochrome P450 monooxygenase btcB.